Here is a 1149-residue protein sequence, read N- to C-terminus: Eukaryotic translation initiation factor 3 subunit A (1149 aa).

A PCI domain is found at 317 to 498 (IQRMTSHVLI…HSVHFGTDLS (182 aa)). 2 disordered regions span residues 496-515 (DLSE…QSMP) and 811-1149 (EEER…KHHR). A compositionally biased stretch (basic and acidic residues) spans 811 to 885 (EEERRRIEEE…APRGEKEERG (75 aa)). A compositionally biased stretch (gly residues) spans 886-895 (GGGGGGGAWR). The segment covering 908-924 (AKPESDWRNAREAREPA) has biased composition (basic and acidic residues). The span at 925–937 (PESAGASSAAAPA) shows a compositional bias: low complexity. Composition is skewed to basic and acidic residues over residues 961–970 (RPPRGDDREP), 1005–1095 (GPMR…DRRG), and 1113–1132 (EPAK…KEAR).

The protein belongs to the eIF-3 subunit A family. Component of the eukaryotic translation initiation factor 3 (eIF-3) complex.

The protein resides in the cytoplasm. RNA-binding component of the eukaryotic translation initiation factor 3 (eIF-3) complex, which is involved in protein synthesis of a specialized repertoire of mRNAs and, together with other initiation factors, stimulates binding of mRNA and methionyl-tRNAi to the 40S ribosome. The eIF-3 complex specifically targets and initiates translation of a subset of mRNAs involved in cell proliferation. This is Eukaryotic translation initiation factor 3 subunit A from Culex quinquefasciatus (Southern house mosquito).